A 227-amino-acid chain; its full sequence is Cytochrome c oxidase subunit 2 (227 aa).

Over Met-1–Ser-14 the chain is Mitochondrial intermembrane. The chain crosses the membrane as a helical span at residues Pro-15–Met-45. Over Leu-46–Gln-59 the chain is Mitochondrial matrix. Residues Glu-60–Met-87 traverse the membrane as a helical segment. Topologically, residues Asp-88–Ala-227 are mitochondrial intermembrane. Residues His-161, Cys-196, Glu-198, Cys-200, His-204, and Met-207 each coordinate Cu cation. Glu-198 contacts Mg(2+). The residue at position 218 (Tyr-218) is a Phosphotyrosine.

It belongs to the cytochrome c oxidase subunit 2 family. Component of the cytochrome c oxidase (complex IV, CIV), a multisubunit enzyme composed of 14 subunits. The complex is composed of a catalytic core of 3 subunits MT-CO1, MT-CO2 and MT-CO3, encoded in the mitochondrial DNA, and 11 supernumerary subunits COX4I, COX5A, COX5B, COX6A, COX6B, COX6C, COX7A, COX7B, COX7C, COX8 and NDUFA4, which are encoded in the nuclear genome. The complex exists as a monomer or a dimer and forms supercomplexes (SCs) in the inner mitochondrial membrane with NADH-ubiquinone oxidoreductase (complex I, CI) and ubiquinol-cytochrome c oxidoreductase (cytochrome b-c1 complex, complex III, CIII), resulting in different assemblies (supercomplex SCI(1)III(2)IV(1) and megacomplex MCI(2)III(2)IV(2)). Found in a complex with TMEM177, COA6, COX18, COX20, SCO1 and SCO2. Interacts with TMEM177 in a COX20-dependent manner. Interacts with COX20. Interacts with COX16. The cofactor is Cu cation.

Its subcellular location is the mitochondrion inner membrane. The enzyme catalyses 4 Fe(II)-[cytochrome c] + O2 + 8 H(+)(in) = 4 Fe(III)-[cytochrome c] + 2 H2O + 4 H(+)(out). Functionally, component of the cytochrome c oxidase, the last enzyme in the mitochondrial electron transport chain which drives oxidative phosphorylation. The respiratory chain contains 3 multisubunit complexes succinate dehydrogenase (complex II, CII), ubiquinol-cytochrome c oxidoreductase (cytochrome b-c1 complex, complex III, CIII) and cytochrome c oxidase (complex IV, CIV), that cooperate to transfer electrons derived from NADH and succinate to molecular oxygen, creating an electrochemical gradient over the inner membrane that drives transmembrane transport and the ATP synthase. Cytochrome c oxidase is the component of the respiratory chain that catalyzes the reduction of oxygen to water. Electrons originating from reduced cytochrome c in the intermembrane space (IMS) are transferred via the dinuclear copper A center (CU(A)) of subunit 2 and heme A of subunit 1 to the active site in subunit 1, a binuclear center (BNC) formed by heme A3 and copper B (CU(B)). The BNC reduces molecular oxygen to 2 water molecules using 4 electrons from cytochrome c in the IMS and 4 protons from the mitochondrial matrix. This is Cytochrome c oxidase subunit 2 (MT-CO2) from Elephas maximus (Indian elephant).